Reading from the N-terminus, the 680-residue chain is Forkhead box protein P4 (680 aa).

Over residues 1–17 (MMVESASETIRSAPSGQ) the composition is skewed to polar residues. The segment at 1 to 56 (MMVESASETIRSAPSGQNGVGSLSGQADGSSGGATGTTASGTGREVTTGADSNGEM) is disordered. 2 positions are modified to phosphoserine: Ser52 and Ser86. Residues Lys175 and Lys246 each participate in a glycyl lysine isopeptide (Lys-Gly) (interchain with G-Cter in SUMO2) cross-link. Positions 262 to 306 (FAAPPKVSPPLSHHTLPNGQPTVLTSRRDSSSHEETPGSHPLYGH) are disordered. The segment covering 276–286 (TLPNGQPTVLT) has biased composition (polar residues). The segment covering 287-298 (SRRDSSSHEETP) has biased composition (basic and acidic residues). Residues 307–332 (GECKWPGCETLCEDLGQFIKHLNTEH) form a C2H2-type zinc finger. Positions 349–370 (VQQLEIQLAKESERLQAMMAHL) are leucine-zipper. Residue Lys378 forms a Glycyl lysine isopeptide (Lys-Gly) (interchain with G-Cter in SUMO2) linkage. Residues 407-445 (GLVHPPTSAAAPVTPLRPPGLGSASLHGGGPARRRSSDK) form a disordered region. A DNA-binding region (fork-head) is located at residues 467 to 559 (RPPFTYASLI…KMTGSPTLVK (93 aa)). Ser554 is modified (phosphoserine). The interval 602-680 (PLSHDDVGAP…EEELPGEELS (79 aa)) is disordered. Residues 617 to 635 (SNGSSSPPRLSPPQYSHQV) show a composition bias toward polar residues. The segment covering 668 to 680 (RDLEEELPGEELS) has biased composition (acidic residues).

Forms homodimers and heterodimers with FOXP1 and FOXP2. Dimerization is required for DNA-binding.

It localises to the nucleus. Its function is as follows. Transcriptional repressor that represses lung-specific expression. This is Forkhead box protein P4 (FOXP4) from Homo sapiens (Human).